Reading from the N-terminus, the 74-residue chain is Conotoxin MiEr93 (74 aa).

A signal peptide spans 1–22 (MKLTCVLIIAVLFLTAYQLATA). A propeptide spanning residues 23-45 (ASYAKGKQKHRALRPADKHLRLT) is cleaved from the precursor. Disulfide bonds link Cys48-Cys62, Cys55-Cys66, and Cys61-Cys73.

It belongs to the conotoxin O1 superfamily. Expressed by the venom duct.

It is found in the secreted. The protein is Conotoxin MiEr93 of Conus miles (Soldier cone).